The sequence spans 116 residues: Protein Rev (116 aa).

2 positions are modified to phosphoserine; by host CK2: serine 5 and serine 8. A homomultimerization region spans residues 18–26 (LIKFLYQSN). Residues 23 to 48 (YQSNPPPSPEGTRQARRNRRRRWRAR) form a disordered region. The short motif at 34–50 (TRQARRNRRRRWRARQR) is the Nuclear localization signal and RNA-binding (RRE) element. The segment covering 36–48 (QARRNRRRRWRAR) has biased composition (basic residues). The short motif at 73–84 (LQLPPLERLNLN) is the Nuclear export signal and binding to XPO1 element. Residues 90–116 (GTSGTQGVGSPQIPVEPPAVLESGTEE) are disordered. Serine 92 and serine 99 each carry phosphoserine; by host.

Belongs to the HIV-1 REV protein family. As to quaternary structure, homomultimer; when bound to the RRE. Multimeric assembly is essential for activity and may involve XPO1. Binds to human KPNB1, XPO1, TNPO1, RANBP5 and IPO7. Interacts with the viral Integrase. Interacts with human KHDRBS1. Interacts with human NAP1; this interaction decreases Rev multimerization and stimulates its activity. Interacts with human DEAD-box helicases DDX3 and DDX24; these interactions may serve for viral RNA export to the cytoplasm and packaging, respectively. Interacts with human PSIP1; this interaction may inhibit HIV-1 DNA integration by promoting dissociation of the Integrase-LEDGF/p75 complex. Post-translationally, asymmetrically arginine dimethylated at one site by host PRMT6. Methylation impairs the RNA-binding activity and export of viral RNA from the nucleus to the cytoplasm. In terms of processing, phosphorylated by protein kinase CK2. Presence of, and maybe binding to the N-terminus of the regulatory beta subunit of CK2 is necessary for CK2-mediated Rev's phosphorylation.

It is found in the host nucleus. The protein localises to the host nucleolus. The protein resides in the host cytoplasm. In terms of biological role, escorts unspliced or incompletely spliced viral pre-mRNAs (late transcripts) out of the nucleus of infected cells. These pre-mRNAs carry a recognition sequence called Rev responsive element (RRE) located in the env gene, that is not present in fully spliced viral mRNAs (early transcripts). This function is essential since most viral proteins are translated from unspliced or partially spliced pre-mRNAs which cannot exit the nucleus by the pathway used by fully processed cellular mRNAs. Rev itself is translated from a fully spliced mRNA that readily exits the nucleus. Rev's nuclear localization signal (NLS) binds directly to KPNB1/Importin beta-1 without previous binding to KPNA1/Importin alpha-1. KPNB1 binds to the GDP bound form of RAN (Ran-GDP) and targets Rev to the nucleus. In the nucleus, the conversion from Ran-GDP to Ran-GTP dissociates Rev from KPNB1 and allows Rev's binding to the RRE in viral pre-mRNAs. Rev multimerization on the RRE via cooperative assembly exposes its nuclear export signal (NES) to the surface. Rev can then form a complex with XPO1/CRM1 and Ran-GTP, leading to nuclear export of the complex. Conversion from Ran-GTP to Ran-GDP mediates dissociation of the Rev/RRE/XPO1/RAN complex, so that Rev can return to the nucleus for a subsequent round of export. Beside KPNB1, also seems to interact with TNPO1/Transportin-1, RANBP5/IPO5 and IPO7/RANBP7 for nuclear import. The nucleoporin-like HRB/RIP is an essential cofactor that probably indirectly interacts with Rev to release HIV RNAs from the perinuclear region to the cytoplasm. The protein is Protein Rev of Homo sapiens (Human).